Reading from the N-terminus, the 1227-residue chain is Methionine synthase (1227 aa).

One can recognise a Hcy-binding domain in the interval serine 2–valine 325. The Zn(2+) site is built by cysteine 247, cysteine 310, and cysteine 311. The region spanning phenylalanine 356–glutamate 617 is the Pterin-binding domain. Residues glutamine 650 to lysine 744 form the B12-binding N-terminal domain. Methylcob(III)alamin-binding positions include glutamate 694, glycine 756 to aspartate 760, histidine 759, serine 804, threonine 808, and alanine 860. A B12-binding domain is found at asparagine 746–alanine 881. In terms of domain architecture, AdoMet activation spans lysine 897–aspartate 1227. Residues aspartate 946, arginine 1134, and tyrosine 1189 to tyrosine 1190 contribute to the S-adenosyl-L-methionine site.

Belongs to the vitamin-B12 dependent methionine synthase family. Methylcob(III)alamin serves as cofactor. Requires Zn(2+) as cofactor.

The enzyme catalyses (6S)-5-methyl-5,6,7,8-tetrahydrofolate + L-homocysteine = (6S)-5,6,7,8-tetrahydrofolate + L-methionine. It participates in amino-acid biosynthesis; L-methionine biosynthesis via de novo pathway; L-methionine from L-homocysteine (MetH route): step 1/1. In terms of biological role, catalyzes the transfer of a methyl group from methyl-cobalamin to homocysteine, yielding enzyme-bound cob(I)alamin and methionine. Subsequently, remethylates the cofactor using methyltetrahydrofolate. This Escherichia coli (strain K12) protein is Methionine synthase (metH).